A 211-amino-acid chain; its full sequence is RILP-like protein 2 (211 aa).

Positions M1 to S32 are disordered. Positions E8–D21 are enriched in acidic residues. An RH1 domain is found at G24–Q106. Residues R70 to S164 adopt a coiled-coil conformation. Phosphoserine is present on S107. In terms of domain architecture, RH2 spans R130–K201. The tract at residues L166–G190 is disordered.

The protein belongs to the RILPL family. Homodimer. Interacts with RAC1. Interacts (via N-terminus) with MYO5A, the interaction is required for its role in dendrite formation. Interacts with RAB8A; interaction is dependent on the phosphorylation of RAB8A on 'Thr-72'. Interacts with RAB10 and RAB12; interaction is dependent on the phosphorylation of 'Thr-73' on RAB10 and 'Ser-105' on RAB12. As to expression, widely expressed. Expressed at higher level in lung.

It localises to the cytoplasm. The protein resides in the cytosol. It is found in the cytoskeleton. The protein localises to the microtubule organizing center. Its subcellular location is the centrosome. It localises to the cell projection. The protein resides in the cilium. In terms of biological role, involved in cell shape and neuronal morphogenesis, positively regulating the establishment and maintenance of dendritic spines. Plays a role in cellular protein transport, including protein transport away from primary cilia. May function via activation of RAC1 and PAK1. In Homo sapiens (Human), this protein is RILP-like protein 2 (RILPL2).